We begin with the raw amino-acid sequence, 128 residues long: Deoxycytidylate deaminase (128 aa).

The region spanning 5–128 is the CMP/dCMP-type deaminase domain; sequence DWDEYFLGIA…IERVVYPKES (124 aa). H81 serves as a coordination point for Zn(2+). The active-site Proton donor is E83. Zn(2+) is bound by residues C107 and C110.

It belongs to the cytidine and deoxycytidylate deaminase family.

The enzyme catalyses dCMP + H2O + H(+) = dUMP + NH4(+). The chain is Deoxycytidylate deaminase (36.1) from Mycobacterium (Mycobacteriophage D29).